A 372-amino-acid chain; its full sequence is tRNA-specific 2-thiouridylase MnmA (372 aa).

Residues 11–18 and Met-37 contribute to the ATP site; that span reads GMSGGVDS. The segment at 97–99 is interaction with target base in tRNA; that stretch reads NPD. The active-site Nucleophile is the Cys-102. Cys-102 and Cys-199 are disulfide-bonded. ATP is bound at residue Gly-126. The segment at 149 to 151 is interaction with tRNA; it reads KDQ. Catalysis depends on Cys-199, which acts as the Cysteine persulfide intermediate. The interval 309–310 is interaction with tRNA; the sequence is RY.

It belongs to the MnmA/TRMU family.

It is found in the cytoplasm. The catalysed reaction is S-sulfanyl-L-cysteinyl-[protein] + uridine(34) in tRNA + AH2 + ATP = 2-thiouridine(34) in tRNA + L-cysteinyl-[protein] + A + AMP + diphosphate + H(+). Functionally, catalyzes the 2-thiolation of uridine at the wobble position (U34) of tRNA, leading to the formation of s(2)U34. The sequence is that of tRNA-specific 2-thiouridylase MnmA from Staphylococcus aureus (strain Mu50 / ATCC 700699).